The sequence spans 106 residues: Small ribosomal subunit protein uS10 (106 aa).

Belongs to the universal ribosomal protein uS10 family. Part of the 30S ribosomal subunit.

Its function is as follows. Involved in the binding of tRNA to the ribosomes. The chain is Small ribosomal subunit protein uS10 from Archaeoglobus fulgidus (strain ATCC 49558 / DSM 4304 / JCM 9628 / NBRC 100126 / VC-16).